Consider the following 176-residue polypeptide: Cytochrome b (176 aa).

3 helical membrane-spanning segments follow: residues 33-53 (FGSL…FLAM), 77-98 (WILR…YLHV), and 113-133 (WNIG…GYVL). Heme b contacts are provided by His83 and His97.

The protein belongs to the cytochrome b family. The cytochrome bc1 complex contains 11 subunits: 3 respiratory subunits (MT-CYB, CYC1 and UQCRFS1), 2 core proteins (UQCRC1 and UQCRC2) and 6 low-molecular weight proteins (UQCRH/QCR6, UQCRB/QCR7, UQCRQ/QCR8, UQCR10/QCR9, UQCR11/QCR10 and a cleavage product of UQCRFS1). This cytochrome bc1 complex then forms a dimer. Heme b is required as a cofactor.

Its subcellular location is the mitochondrion inner membrane. In terms of biological role, component of the ubiquinol-cytochrome c reductase complex (complex III or cytochrome b-c1 complex) that is part of the mitochondrial respiratory chain. The b-c1 complex mediates electron transfer from ubiquinol to cytochrome c. Contributes to the generation of a proton gradient across the mitochondrial membrane that is then used for ATP synthesis. The polypeptide is Cytochrome b (MT-CYB) (Myotis leibii (Eastern small-footed myotis)).